A 506-amino-acid chain; its full sequence is Acetaldehyde dehydrogenase (506 aa).

Residues E262 and C301 contribute to the active site.

Belongs to the aldehyde dehydrogenase family.

It carries out the reaction acetaldehyde + NAD(+) + H2O = acetate + NADH + 2 H(+). It participates in alcohol metabolism; ethanol degradation; acetate from ethanol: step 2/2. In terms of biological role, catalyzes the NAD(+)-dependent oxidation of acetaldehyde to acetate. Is likely a component of the ethanol oxidation system that allows P.aeruginosa to grow on ethanol as the sole carbon and energy source. The sequence is that of Acetaldehyde dehydrogenase from Pseudomonas aeruginosa.